The primary structure comprises 536 residues: Chorismate synthase (536 aa).

The active site involves His17. The segment at 37 to 59 (EDVQPQLNRRRPGQGPLSTQRRE) is disordered. Residue His104 is part of the active site. The disordered stretch occupies residues 344–377 (ERDGCSAATLSRERASDGRTTSRHEEEVERGRER). Residues 354–377 (SRERASDGRTTSRHEEEVERGRER) show a composition bias toward basic and acidic residues. Residue Asp489 is part of the active site.

The protein belongs to the chorismate synthase family. The cofactor is FMNH2.

It carries out the reaction 5-O-(1-carboxyvinyl)-3-phosphoshikimate = chorismate + phosphate. The enzyme catalyses FMNH2 + NADP(+) = FMN + NADPH + 2 H(+). It functions in the pathway metabolic intermediate biosynthesis; chorismate biosynthesis; chorismate from D-erythrose 4-phosphate and phosphoenolpyruvate: step 7/7. Functionally, bifunctional chorismate synthase and flavin reductase. Catalyzes the conversion of 5-enolpyruvylshikimate 3-phosphate (EPSP) to form chorismate. Acts also as a flavin reductase (FR) able to generate reduced flavin mononucleotide in the presence of NADPH. The sequence is that of Chorismate synthase (AROC) from Toxoplasma gondii.